The primary structure comprises 37 residues: Large ribosomal subunit protein bL36 (37 aa).

It belongs to the bacterial ribosomal protein bL36 family.

This Mycoplasma pneumoniae (strain ATCC 29342 / M129 / Subtype 1) (Mycoplasmoides pneumoniae) protein is Large ribosomal subunit protein bL36.